A 399-amino-acid polypeptide reads, in one-letter code: Serine/threonine-protein kinase PKZ1 (399 aa).

The tract at residues Pro-30 to Arg-50 is disordered. Residues Trp-92 to Met-371 enclose the Protein kinase domain. Residues Ile-98 to Val-106 and Lys-121 each bind ATP. The Proton acceptor role is filled by Asp-219.

The protein belongs to the protein kinase superfamily. CAMK Ser/Thr protein kinase family. Interacts with BZP1.

The enzyme catalyses L-seryl-[protein] + ATP = O-phospho-L-seryl-[protein] + ADP + H(+). It catalyses the reaction L-threonyl-[protein] + ATP = O-phospho-L-threonyl-[protein] + ADP + H(+). Functionally, may regulate an early stage of the zoospore pathway. In Phytophthora infestans (Potato late blight agent), this protein is Serine/threonine-protein kinase PKZ1.